The following is a 160-amino-acid chain: Ribosomal RNA large subunit methyltransferase H (160 aa).

S-adenosyl-L-methionine-binding positions include L76, G108, and 127–132 (LGKMTW).

This sequence belongs to the RNA methyltransferase RlmH family. In terms of assembly, homodimer.

It is found in the cytoplasm. The enzyme catalyses pseudouridine(1915) in 23S rRNA + S-adenosyl-L-methionine = N(3)-methylpseudouridine(1915) in 23S rRNA + S-adenosyl-L-homocysteine + H(+). Its function is as follows. Specifically methylates the pseudouridine at position 1915 (m3Psi1915) in 23S rRNA. The polypeptide is Ribosomal RNA large subunit methyltransferase H (Rhizobium rhizogenes (strain K84 / ATCC BAA-868) (Agrobacterium radiobacter)).